The chain runs to 304 residues: Type II methyltransferase M.HindV (304 aa).

The 299-residue stretch at 1-299 (MKCVDLFSGC…SAIINFEKEP (299 aa)) folds into the SAM-dependent MTase C5-type domain. Residue Cys75 is part of the active site.

Belongs to the class I-like SAM-binding methyltransferase superfamily. C5-methyltransferase family.

It carries out the reaction a 2'-deoxycytidine in DNA + S-adenosyl-L-methionine = a 5-methyl-2'-deoxycytidine in DNA + S-adenosyl-L-homocysteine + H(+). Functionally, a methylase, recognizes the double-stranded sequence 5'-GRCGYC-3', methylates C-? on both strands, and protects the DNA from cleavage by the HindV endonuclease. This Haemophilus influenzae (strain ATCC 51907 / DSM 11121 / KW20 / Rd) protein is Type II methyltransferase M.HindV (hindVM).